We begin with the raw amino-acid sequence, 72 residues long: uncharacterized protein (72 aa).

This is an uncharacterized protein from Homo sapiens (Human).